The sequence spans 678 residues: MKSYLLEIGCEELPPKAILTYKEFLKEYAHQTFKDFFIYNSPENIKIYATPRRLAVLIKNLKKKQDNQKITLIGPPYKVAVDSEGKFTKAALSFAEKNNIPLEKLEKITTEKGEYLGATIEKEGESLELFIKHKIPQLFNQFPQLKSMKWNNSDYRFPRPIRWIVSLLDDKVIEFEVASVKTDRFTHLHRFMTKPIGRGERKDINHANDYEEITKLGYIIANFEDRKHSIKTQYEGFARQLNASIIEDDELIDEITCLTEFPVGIVGDFSPEYLTLPKEVIITVCKHHQRYLNFEKDGKLIPKFLAFSNNAVKDRDIVKNGYEKVLRARLEDALFFYKEDLKKKLDDNIEKLKGIQFHEKLGSMYDKVLRNLELALKLADLTGYKDAEKIKRAVMLSKADLLTEMVKEFDELQGIMGMYYSQKQGEEEEISKSIYEHYLPKTAEDNIPETNLGTLLALADKLDTVISFIKIGELPKPSADPFGIRRNAIGIVRLLVEKEIDLDLRKVIDDESILDFILSRLESYLQSKGYKTDIINAVLSLKDGNIYRNYLKVKALSQLRNLPDYENVIMVFKRVGNIIPEDFKFSNVDVNLLVSQPEKELYKKFIEIKDKFKRFIENKDYDKALGLLLELKPYIDRFFDNVMIMVEDEKLKNNRLSLLKEINDLFRNIADFTKLIGG.

Belongs to the class-II aminoacyl-tRNA synthetase family. In terms of assembly, tetramer of two alpha and two beta subunits.

The protein resides in the cytoplasm. The catalysed reaction is tRNA(Gly) + glycine + ATP = glycyl-tRNA(Gly) + AMP + diphosphate. This is Glycine--tRNA ligase beta subunit from Sulfurihydrogenibium sp. (strain YO3AOP1).